The sequence spans 218 residues: GTP cyclohydrolase 1 (218 aa).

Zn(2+) contacts are provided by Cys109, His112, and Cys180.

The protein belongs to the GTP cyclohydrolase I family. Toroid-shaped homodecamer, composed of two pentamers of five dimers.

It carries out the reaction GTP + H2O = 7,8-dihydroneopterin 3'-triphosphate + formate + H(+). Its pathway is cofactor biosynthesis; 7,8-dihydroneopterin triphosphate biosynthesis; 7,8-dihydroneopterin triphosphate from GTP: step 1/1. The chain is GTP cyclohydrolase 1 from Haemophilus ducreyi (strain 35000HP / ATCC 700724).